The sequence spans 259 residues: uncharacterized protein (259 aa).

Residues 19 to 249 (TKIPGAKYVI…DEVINTIKKK (231 aa)) enclose the Radical SAM core domain. [4Fe-4S] cluster-binding residues include Cys-34, Cys-38, and Cys-41.

Requires [4Fe-4S] cluster as cofactor.

This is an uncharacterized protein from Methanocaldococcus jannaschii (strain ATCC 43067 / DSM 2661 / JAL-1 / JCM 10045 / NBRC 100440) (Methanococcus jannaschii).